Reading from the N-terminus, the 32-residue chain is Photosystem II reaction center protein Z (32 aa).

Residues 12–32 (IGSAAWAGLVLLVGTLNYLVI) form a helical membrane-spanning segment.

Belongs to the PsbZ family. In terms of assembly, PSII is composed of 1 copy each of membrane proteins PsbA, PsbB, PsbC, PsbD, PsbE, PsbF, PsbH, PsbI, PsbJ, PsbK, PsbL, PsbM, PsbT, PsbY, PsbZ, Psb30/Ycf12, at least 3 peripheral proteins of the oxygen-evolving complex and a large number of cofactors. It forms dimeric complexes.

It localises to the plastid. The protein localises to the chloroplast thylakoid membrane. May control the interaction of photosystem II (PSII) cores with the light-harvesting antenna, regulates electron flow through the 2 photosystem reaction centers. PSII is a light-driven water plastoquinone oxidoreductase, using light energy to abstract electrons from H(2)O, generating a proton gradient subsequently used for ATP formation. The chain is Photosystem II reaction center protein Z from Euglena anabaena (Euglenaria anabaena).